The primary structure comprises 664 residues: MLLLTLIFLPFLGSVAAGLFGFYIGRKGSVFITTLTTFLSCIFSLIIIYNSITNEYEYIIYISNWINSGLFNCNWCFLFDSLTMIMLVVVTSISTLVHLYSSQYMAHDPHLSRFMSYLSLFTFFMIILVTGDNFMQMFVGWEGVGFCSYLLINFWFTRLQANKAAIKAMLVNRISDLILLLGVLTIFYNIRTIEYFSTFAAISIVKDFKFIFFNYILSIIDVACILIFIGAMGKSAQIFLHLWLPDAMEGPTPVSALIHAATMVTAGVYLTARCSPMFEYSMFSLKIITIIGASTAFFASTVGLVQNDFKKIVAYSTCSQLGYMFFACGLSNYPLAIFHLSNHAYFKALLFLCSGAVIHAMGDEQDIRKMGGLRRILPFTYIMFLIGSLSLMGFPFLTGFYSKDLILEVAFASFSETGHFAYWLGTIGAFFTAFYSTRLLFFAFLSETNAYKNIIKNAHDVPLEMGIPLGLLAFGSIFIGYISKDMFVGLGSDFWNNSIYINPFNNQMIDAEFLPTFFKLLPVILSFCGLFGAFYLYFFKFKFLYNLKISEYGLYFYNFLNRKWYFDKIYYEFINQYILKIGYNVTYKMIDKGLIEMCGPYGLTTIFSFLSQQIILLQTGYIYHYSLLMLISTIFLINIIFFSIIYYFNIITILLFLFIFLLIK.

The next 17 helical transmembrane spans lie at 2–22 (LLLT…LFGF), 28–48 (GSVF…LIII), 77–97 (FLFD…STLV), 120–140 (LFTF…MFVG), 168–188 (AMLV…TIFY), 210–230 (FIFF…IFIG), 250–270 (GPTP…GVYL), 285–305 (LKII…VGLV), 321–341 (LGYM…FHLS), 342–362 (NHAY…HAMG), 376–396 (ILPF…GFPF), 424–444 (LGTI…FFAF), 462–482 (PLEM…IGYI), 521–541 (LPVI…FFKF), 590–610 (IDKG…FSFL), 614–634 (IILL…ISTI), and 639–659 (IIFF…FLFI).

It belongs to the complex I subunit 5 family.

The protein localises to the mitochondrion inner membrane. It carries out the reaction a ubiquinone + NADH + 5 H(+)(in) = a ubiquinol + NAD(+) + 4 H(+)(out). Its function is as follows. Core subunit of the mitochondrial membrane respiratory chain NADH dehydrogenase (Complex I) that is believed to belong to the minimal assembly required for catalysis. Complex I functions in the transfer of electrons from NADH to the respiratory chain. The immediate electron acceptor for the enzyme is believed to be ubiquinone. This Phytophthora infestans (Potato late blight agent) protein is NADH-ubiquinone oxidoreductase chain 5 (ND5).